A 237-amino-acid chain; its full sequence is UPF0688 protein C1orf174 homolog (237 aa).

The interval 1–187 (MRSRKLAGGV…LLDDDSNQPM (187 aa)) is disordered. The span at 11 to 28 (RSSARLRARSCSAASASA) shows a compositional bias: low complexity. Positions 29-47 (QDTHVTTSAQTACQTPSSH) are enriched in polar residues. Residues 48-76 (KATDRRTSKKFKYDKGHIVKSELQKHRSD) show a composition bias toward basic and acidic residues. Position 183 is a phosphoserine (serine 183).

It belongs to the UPF0688 family.

It is found in the nucleus. This is UPF0688 protein C1orf174 homolog from Bos taurus (Bovine).